The following is a 399-amino-acid chain: 5'-C-glycyluridine monooxygenase-decarboxylase (399 aa).

Residue Thr-179 coordinates phosphate. At Lys-230 the chain carries N6-(pyridoxal phosphate)lysine. Residues Arg-318, Arg-322, Arg-353, and Arg-367 each coordinate phosphate.

It belongs to the SelA family. Homooctamer; tetramer of homodimers. Pyridoxal 5'-phosphate is required as a cofactor.

It carries out the reaction (5'S,6'R)-C-glycyluridine + O2 = uridine-5'-carboxamide + CO2 + H2O. The protein operates within antibiotic biosynthesis. With respect to regulation, activity is dependent on phosphate. Its function is as follows. Monooxygenase-decarboxylase involved in the biosynthesis of the capuramycin-type nucleoside antibiotic A-503083. Catalyzes the oxidative decarboxylation of 5'-C-glycyluridine (GlyU) to uridine-5'-carboxamide (CarU). Is stereospecific for the (5'S,6'R)-diastereomer of GlyU. Directly incorporates a single oxygen atom from O(2) into the product CarU. The sequence is that of 5'-C-glycyluridine monooxygenase-decarboxylase from Streptomyces sp.